A 47-amino-acid polypeptide reads, in one-letter code: Delta-stichotoxin-Hcr1d (47 aa).

Disulfide bonds link cysteine 3–cysteine 43, cysteine 5–cysteine 33, and cysteine 26–cysteine 44.

The protein belongs to the sea anemone sodium channel inhibitory toxin family. Type II subfamily.

Its subcellular location is the secreted. The protein localises to the nematocyst. Functionally, binds to site 3 of voltage-gated sodium channels and inhibits the inactivation process. The protein is Delta-stichotoxin-Hcr1d of Radianthus crispa (Leathery sea anemone).